The sequence spans 777 residues: Lon protease (777 aa).

Residues 11-204 enclose the Lon N-terminal domain; the sequence is IPVLPLRDVV…FLMAIMETEI (194 aa). Residue 356 to 363 participates in ATP binding; sequence GPPGVGKT. The region spanning 592–773 is the Lon proteolytic domain; it reads LNQIGQVVGL…EEVLKIALEN (182 aa). Active-site residues include Ser-679 and Lys-722.

Belongs to the peptidase S16 family. As to quaternary structure, homohexamer. Organized in a ring with a central cavity.

The protein localises to the cytoplasm. The catalysed reaction is Hydrolysis of proteins in presence of ATP.. Functionally, ATP-dependent serine protease that mediates the selective degradation of mutant and abnormal proteins as well as certain short-lived regulatory proteins. Required for cellular homeostasis and for survival from DNA damage and developmental changes induced by stress. Degrades polypeptides processively to yield small peptide fragments that are 5 to 10 amino acids long. Binds to DNA in a double-stranded, site-specific manner. The protein is Lon protease of Buchnera aphidicola subsp. Schizaphis graminum (strain Sg).